The following is a 358-amino-acid chain: Mannonate dehydratase (358 aa).

Belongs to the mannonate dehydratase family. Requires Fe(2+) as cofactor. It depends on Mn(2+) as a cofactor.

It catalyses the reaction D-mannonate = 2-dehydro-3-deoxy-D-gluconate + H2O. It participates in carbohydrate metabolism; pentose and glucuronate interconversion. Its function is as follows. Catalyzes the dehydration of D-mannonate. The protein is Mannonate dehydratase of Shouchella clausii (strain KSM-K16) (Alkalihalobacillus clausii).